The following is a 122-amino-acid chain: Large ribosomal subunit protein uL14 (122 aa).

This sequence belongs to the universal ribosomal protein uL14 family. In terms of assembly, part of the 50S ribosomal subunit. Forms a cluster with proteins L3 and L19. In the 70S ribosome, L14 and L19 interact and together make contacts with the 16S rRNA in bridges B5 and B8.

Functionally, binds to 23S rRNA. Forms part of two intersubunit bridges in the 70S ribosome. This is Large ribosomal subunit protein uL14 from Brevibacillus brevis (strain 47 / JCM 6285 / NBRC 100599).